A 651-amino-acid chain; its full sequence is Acetyl-coenzyme A synthetase (651 aa).

CoA-binding positions include 193–196 (RRGK) and threonine 312. Residues 388–390 (GEP), 412–417 (DTWWQT), aspartate 501, and arginine 516 each bind ATP. Serine 524 provides a ligand contact to CoA. The Mg(2+) site is built by valine 538, histidine 540, and valine 543. Lysine 610 bears the N6-acetyllysine mark.

This sequence belongs to the ATP-dependent AMP-binding enzyme family. The cofactor is Mg(2+). Acetylated. Deacetylation by the SIR2-homolog deacetylase activates the enzyme.

It carries out the reaction acetate + ATP + CoA = acetyl-CoA + AMP + diphosphate. Functionally, catalyzes the conversion of acetate into acetyl-CoA (AcCoA), an essential intermediate at the junction of anabolic and catabolic pathways. AcsA undergoes a two-step reaction. In the first half reaction, AcsA combines acetate with ATP to form acetyl-adenylate (AcAMP) intermediate. In the second half reaction, it can then transfer the acetyl group from AcAMP to the sulfhydryl group of CoA, forming the product AcCoA. The protein is Acetyl-coenzyme A synthetase of Streptomyces coelicolor (strain ATCC BAA-471 / A3(2) / M145).